The sequence spans 342 residues: MPSPLSLCRYLPRELSPSVDSRSCSIPLVAPRKAGKLFLGTTPPRAPGLPRRLAWFSIDWEQVCLMHRLGSGGFGSVYKATYHGVPVAIKQVNKCTKDLRASQRSFWAELNIARLRHDNIVRVVAASTRTPEDSNSLGTIIMEFGGNVTLHQVIYGATRSPEPLSCREQLSLGKCLKYSLDVVNGLLFLHSQSILHLDLKPANILISEQDVCKISDFGCSQKLQDLRCRQSPHHIGGTYTHQAPEILKGEIATPKADIYSFGITLWQMTTREVPYSGEPQYVQYAVVAYNLRPSLTGAVFTASLTRKTLQNIIQNCWEARALQRPGAELLQRDLKAFRGALG.

In terms of domain architecture, Protein kinase spans 63-338; the sequence is VCLMHRLGSG…LLQRDLKAFR (276 aa). Residues 69–77 and lysine 90 each bind ATP; that span reads LGSGGFGSV. Aspartate 198 functions as the Proton acceptor in the catalytic mechanism.

It belongs to the protein kinase superfamily. Ser/Thr protein kinase family.

It catalyses the reaction L-seryl-[protein] + ATP = O-phospho-L-seryl-[protein] + ADP + H(+). It carries out the reaction L-threonyl-[protein] + ATP = O-phospho-L-threonyl-[protein] + ADP + H(+). The sequence is that of Serine/threonine-protein kinase-transforming protein mos (V-MOS) from Myeloproliferative sarcoma virus (isolate ts159).